The sequence spans 240 residues: MGEGKGENKWGAAQMSNNPIRNKDFKVFGLVEKIYEQKGEFVKLFAEIKKKLYSMSIEQLLLMPSYARSKLKDEYGHIEFEYAGYGDRIVIVKLEDPWTDDTNKRQGKTAFLVYFSYQTSKPLVPAQITYKIRSIFKTMKELNQKGYRVFPALFANSITPGALKILQNPKINIRFFSDVNDLLNWIYSKVLNRLKKIVEIAKFTLKFDKIFTFLKTIIAGLGYEVPSDILMAWASKPVRP.

This is an uncharacterized protein from Acidianus two-tailed virus (ATV).